A 424-amino-acid chain; its full sequence is Histidine--tRNA ligase (424 aa).

It belongs to the class-II aminoacyl-tRNA synthetase family. Homodimer.

It localises to the cytoplasm. The enzyme catalyses tRNA(His) + L-histidine + ATP = L-histidyl-tRNA(His) + AMP + diphosphate + H(+). This Shewanella piezotolerans (strain WP3 / JCM 13877) protein is Histidine--tRNA ligase.